A 61-amino-acid polypeptide reads, in one-letter code: Small ribosomal subunit protein uS14 (61 aa).

4 residues coordinate Zn(2+): Cys24, Cys27, Cys40, and Cys43.

This sequence belongs to the universal ribosomal protein uS14 family. Zinc-binding uS14 subfamily. As to quaternary structure, part of the 30S ribosomal subunit. Contacts proteins S3 and S10. The cofactor is Zn(2+).

Its function is as follows. Binds 16S rRNA, required for the assembly of 30S particles and may also be responsible for determining the conformation of the 16S rRNA at the A site. This is Small ribosomal subunit protein uS14 from Borreliella burgdorferi (strain ATCC 35210 / DSM 4680 / CIP 102532 / B31) (Borrelia burgdorferi).